A 260-amino-acid chain; its full sequence is Proteasome subunit alpha (260 aa).

Belongs to the peptidase T1A family. The 20S proteasome core is composed of 14 alpha and 14 beta subunits that assemble into four stacked heptameric rings, resulting in a barrel-shaped structure. The two inner rings, each composed of seven catalytic beta subunits, are sandwiched by two outer rings, each composed of seven alpha subunits. The catalytic chamber with the active sites is on the inside of the barrel. Has a gated structure, the ends of the cylinder being occluded by the N-termini of the alpha-subunits. Is capped at one or both ends by the proteasome regulatory ATPase, PAN.

The protein localises to the cytoplasm. Its activity is regulated as follows. The formation of the proteasomal ATPase PAN-20S proteasome complex, via the docking of the C-termini of PAN into the intersubunit pockets in the alpha-rings, triggers opening of the gate for substrate entry. Interconversion between the open-gate and close-gate conformations leads to a dynamic regulation of the 20S proteasome proteolysis activity. Functionally, component of the proteasome core, a large protease complex with broad specificity involved in protein degradation. The polypeptide is Proteasome subunit alpha (Thermococcus gammatolerans (strain DSM 15229 / JCM 11827 / EJ3)).